The chain runs to 99 residues: ATP-dependent Clp protease adapter protein ClpS (99 aa).

It belongs to the ClpS family. Binds to the N-terminal domain of the chaperone ClpA.

Its function is as follows. Involved in the modulation of the specificity of the ClpAP-mediated ATP-dependent protein degradation. This is ATP-dependent Clp protease adapter protein ClpS from Helicobacter hepaticus (strain ATCC 51449 / 3B1).